The sequence spans 280 residues: Undecaprenyl-diphosphatase (280 aa).

Helical transmembrane passes span 1–21 (MTIL…FLPV), 41–61 (FVRA…LVLY), 87–107 (FDLY…GFLF), 115–135 (LGSV…MLFV), 147–167 (ITYP…FLPG), 186–206 (KAAA…ATLL), 226–246 (VLLV…KFFI), and 260–280 (YRIL…SLAV).

This sequence belongs to the UppP family.

Its subcellular location is the cell inner membrane. It carries out the reaction di-trans,octa-cis-undecaprenyl diphosphate + H2O = di-trans,octa-cis-undecaprenyl phosphate + phosphate + H(+). Its function is as follows. Catalyzes the dephosphorylation of undecaprenyl diphosphate (UPP). Confers resistance to bacitracin. The sequence is that of Undecaprenyl-diphosphatase from Porphyromonas gingivalis (strain ATCC BAA-308 / W83).